Here is a 258-residue protein sequence, read N- to C-terminus: Global transcriptional regulator CodY (258 aa).

Residues 1-156 (MSSLLDKTRM…SATIIGLEIL (156 aa)) are GAF domain. A DNA-binding region (H-T-H motif) is located at residues 204–223 (ASKIADKVGITRSVIVNALR).

It belongs to the CodY family.

The protein resides in the cytoplasm. Functionally, DNA-binding global transcriptional regulator which is involved in the adaptive response to starvation and acts by directly or indirectly controlling the expression of numerous genes in response to nutrient availability. During rapid exponential growth, CodY is highly active and represses genes whose products allow adaptation to nutrient depletion. The protein is Global transcriptional regulator CodY of Clostridium botulinum (strain Okra / Type B1).